We begin with the raw amino-acid sequence, 1926 residues long: Myosin-15 (1926 aa).

The 51-residue stretch at D29–P79 folds into the Myosin N-terminal SH3-like domain. The Myosin motor domain maps to E83–D770. K127 carries the N6,N6,N6-trimethyllysine modification. G176–T183 contacts ATP. Actin-binding regions lie at residues L647–V669 and R749–G763. The IQ domain occupies L773 to A802. Residues K833–E1926 are a coiled coil.

It belongs to the TRAFAC class myosin-kinesin ATPase superfamily. Myosin family. In terms of assembly, muscle myosin is a hexameric protein that consists of 2 heavy chain subunits (MHC), 2 alkali light chain subunits (MLC) and 2 regulatory light chain subunits (MLC-2).

It is found in the cytoplasm. The protein localises to the myofibril. Muscle contraction. This chain is Myosin-15 (MYH15), found in Homo sapiens (Human).